The following is a 258-amino-acid chain: Imidazole glycerol phosphate synthase subunit HisF (258 aa).

Catalysis depends on residues aspartate 11 and aspartate 130.

It belongs to the HisA/HisF family. As to quaternary structure, heterodimer of HisH and HisF.

It is found in the cytoplasm. The enzyme catalyses 5-[(5-phospho-1-deoxy-D-ribulos-1-ylimino)methylamino]-1-(5-phospho-beta-D-ribosyl)imidazole-4-carboxamide + L-glutamine = D-erythro-1-(imidazol-4-yl)glycerol 3-phosphate + 5-amino-1-(5-phospho-beta-D-ribosyl)imidazole-4-carboxamide + L-glutamate + H(+). It functions in the pathway amino-acid biosynthesis; L-histidine biosynthesis; L-histidine from 5-phospho-alpha-D-ribose 1-diphosphate: step 5/9. Its function is as follows. IGPS catalyzes the conversion of PRFAR and glutamine to IGP, AICAR and glutamate. The HisF subunit catalyzes the cyclization activity that produces IGP and AICAR from PRFAR using the ammonia provided by the HisH subunit. The chain is Imidazole glycerol phosphate synthase subunit HisF from Bradyrhizobium sp. (strain ORS 278).